Consider the following 145-residue polypeptide: Protein BUD31 homolog 1 (145 aa).

Belongs to the BUD31 (G10) family.

The protein resides in the nucleus. This chain is Protein BUD31 homolog 1, found in Oryza sativa subsp. japonica (Rice).